The primary structure comprises 274 residues: uncharacterized protein (274 aa).

The 139-residue stretch at 3-141 folds into the C2 NT-type domain; sequence IFIPKARRPT…TIRIGISLKQ (139 aa).

It to yeast YBL086c.

This is an uncharacterized protein from Schizosaccharomyces pombe (strain 972 / ATCC 24843) (Fission yeast).